Consider the following 904-residue polypeptide: Alanine--tRNA ligase (904 aa).

Residues H584, H588, C687, and H691 each coordinate Zn(2+).

It belongs to the class-II aminoacyl-tRNA synthetase family. Requires Zn(2+) as cofactor.

The protein localises to the cytoplasm. It carries out the reaction tRNA(Ala) + L-alanine + ATP = L-alanyl-tRNA(Ala) + AMP + diphosphate. Catalyzes the attachment of alanine to tRNA(Ala) in a two-step reaction: alanine is first activated by ATP to form Ala-AMP and then transferred to the acceptor end of tRNA(Ala). Also edits incorrectly charged Ser-tRNA(Ala) and Gly-tRNA(Ala) via its editing domain. In Mycobacterium tuberculosis (strain ATCC 25177 / H37Ra), this protein is Alanine--tRNA ligase.